We begin with the raw amino-acid sequence, 312 residues long: Molybdenum cofactor biosynthesis bifunctional protein (312 aa).

The tract at residues 1–155 is molybdenum cofactor biosynthesis protein C; sequence MEFTHLDENG…GGKSSAAEYH (155 aa). Substrate-binding positions include 74–76 and 110–111; these read LCH and ME. Asp125 is an active-site residue. The tract at residues 156-312 is molybdenum cofactor biosynthesis protein B; it reads PRTAILVMSD…FPMLKGDGHA (157 aa).

The protein in the N-terminal section; belongs to the MoaC family. This sequence in the C-terminal section; belongs to the MoaB/Mog family.

It catalyses the reaction (8S)-3',8-cyclo-7,8-dihydroguanosine 5'-triphosphate = cyclic pyranopterin phosphate + diphosphate. It participates in cofactor biosynthesis; molybdopterin biosynthesis. In terms of biological role, catalyzes the conversion of (8S)-3',8-cyclo-7,8-dihydroguanosine 5'-triphosphate to cyclic pyranopterin monophosphate (cPMP). The sequence is that of Molybdenum cofactor biosynthesis bifunctional protein (moaCB) from Chlorobaculum tepidum (strain ATCC 49652 / DSM 12025 / NBRC 103806 / TLS) (Chlorobium tepidum).